We begin with the raw amino-acid sequence, 104 residues long: Intracellular chorismate mutase (104 aa).

Positions 23-104 (AVPEIDDLRR…LRLGRGRLGY (82 aa)) constitute a Chorismate mutase domain. Residues R59, V68, and E72 each contribute to the chorismate site.

As to quaternary structure, homodimer. Probably interacts with AroG (MSMEG_4244).

The protein resides in the cytoplasm. It carries out the reaction chorismate = prephenate. It functions in the pathway metabolic intermediate biosynthesis; prephenate biosynthesis; prephenate from chorismate: step 1/1. Its activity is regulated as follows. The formation of the complex with AroG activates the chorismate mutase activity. Its function is as follows. Catalyzes the Claisen rearrangement of chorismate to prephenate. Probably involved in the aromatic amino acid biosynthesis. This chain is Intracellular chorismate mutase, found in Mycolicibacterium smegmatis (strain ATCC 700084 / mc(2)155) (Mycobacterium smegmatis).